Here is a 776-residue protein sequence, read N- to C-terminus: U3 small nucleolar RNA-associated protein 4 (776 aa).

6 WD repeats span residues 35–40 (RCRFVD), 132–169 (LPLR…VLID), 178–214 (EHDT…RIWS), 230–266 (KVDK…KFWD), 271–308 (TLNQ…FQFS), and 417–452 (VCKL…KVFH).

In terms of assembly, interacts with snoRNA U3. Interacts with MPP10. Component of the ribosomal small subunit (SSU) processome composed of at least 40 protein subunits and snoRNA U3. In the absence of snoRNA3, forms a complex with other t-UTPs. This complex can associate with pre-18S ribosomal RNAs.

Its subcellular location is the nucleus. It is found in the nucleolus. Functionally, involved in nucleolar processing of pre-18S ribosomal RNA. Required for optimal pre-ribosomal RNA transcription by RNA polymerase I together with a subset of U3 proteins required for transcription (t-UTPs). This Saccharomyces cerevisiae (strain ATCC 204508 / S288c) (Baker's yeast) protein is U3 small nucleolar RNA-associated protein 4 (UTP4).